The following is a 293-amino-acid chain: uncharacterized protein (293 aa).

Belongs to the TolB family.

This is an uncharacterized protein from Agrobacterium fabrum (strain C58 / ATCC 33970) (Agrobacterium tumefaciens (strain C58)).